Reading from the N-terminus, the 704-residue chain is Polyribonucleotide nucleotidyltransferase (704 aa).

Mg(2+)-binding residues include Asp-485 and Asp-491. A KH domain is found at 552–611 (PKTETIQIDPDKIRSVIGAGGKVINKIIQDTGVKIDIKEDGSVFVSSSDHAGVKEAIKII). The region spanning 621-689 (GEIYLGKVTK…SQGRINLSRK (69 aa)) is the S1 motif domain.

The protein belongs to the polyribonucleotide nucleotidyltransferase family. The cofactor is Mg(2+).

It localises to the cytoplasm. The enzyme catalyses RNA(n+1) + phosphate = RNA(n) + a ribonucleoside 5'-diphosphate. In terms of biological role, involved in mRNA degradation. Catalyzes the phosphorolysis of single-stranded polyribonucleotides processively in the 3'- to 5'-direction. This chain is Polyribonucleotide nucleotidyltransferase, found in Clostridium botulinum (strain Eklund 17B / Type B).